The following is a 151-amino-acid chain: MRCPYCGYEETRVLDSRVDSSGMTVRRRRECVKCKGRFTTYERYEFGPVFVVKKDGKREKFDRAKILNGVMKACEKTNVTLEEIEKLVDDVVNDVQKSGNLEILTLEIGKLVMEKLKKLNGVAYVRFASVYKDFREIDQFLEVVEELKKEK.

A zinc finger spans residues 3 to 34 (CPYCGYEETRVLDSRVDSSGMTVRRRRECVKC). An ATP-cone domain is found at 49 to 139 (VFVVKKDGKR…VYKDFREIDQ (91 aa)).

This sequence belongs to the NrdR family. The cofactor is Zn(2+).

Its function is as follows. Negatively regulates transcription of bacterial ribonucleotide reductase nrd genes and operons by binding to NrdR-boxes. This Thermosipho melanesiensis (strain DSM 12029 / CIP 104789 / BI429) protein is Transcriptional repressor NrdR.